Reading from the N-terminus, the 370-residue chain is Probable neutral protease 2 homolog TRV_02539 (370 aa).

Residues 1–19 (MQLVAALAALGALVAPAVA) form the signal peptide. Positions 20-188 (YPHAPMNETL…SIHSRALQKR (169 aa)) are excised as a propeptide. 2 disulfides stabilise this stretch: C196–C267 and C274–C292. H316 is a binding site for Zn(2+). Residue E317 is part of the active site. Zn(2+) contacts are provided by H320 and D331.

Belongs to the peptidase M35 family. It depends on Zn(2+) as a cofactor.

It localises to the secreted. It carries out the reaction Preferential cleavage of bonds with hydrophobic residues in P1'. Also 3-Asn-|-Gln-4 and 8-Gly-|-Ser-9 bonds in insulin B chain.. Its function is as follows. Probable secreted metalloprotease that shows high activities on basic nuclear substrates such as histone and protamine. May be involved in virulence. This chain is Probable neutral protease 2 homolog TRV_02539, found in Trichophyton verrucosum (strain HKI 0517).